The following is a 760-amino-acid chain: METCGSPSPLPREPAGGVAMEDRARPLRALPRGQSPPPPLQTSSDAEVMDVGSGGDGQAEPPAEDPLNFYGASLLSKGSSSKARLLVDPNCSGHSPRTARHAPAVRKFSPDLKLLKDVKISVSFTESCRSEDRKVLYTGAERDVRAECGLALSPVIGDVHAGPFGGSVGNGVGAGGESAGKRDEEHELDQEKRVEYAVLDELEDFTDNLELDEEGAGGFTAKAIVQRDRVDEEALNFSYEDDFDNDVDALLEEGLCAPKKRRMEEKYGGDSDHPSDGETSVQPMMTKIKTVLKSRGRPPTEPLPDGWIMTFHNSGVPVYLHRESRVVTWSRPYFLGTGSIRKHGPPLTSIPCLHYRKMKDSEERERAAGIAPPEPELPPDEPDPLGTDAGPPDEKDPLGAEAAPGALGQVKAKVEVCKDESVDLEEFRNYLEKRFDFEQVTVKKFRTWAERRQFNREMKRKQAESERPILPANQKLITLSVQDAPTKKEFVINPNGKSEVCILHEYMQRVLKVRPVYSFFECENPSEPFGASVTIDGVTYGSGTASSKKLAKNKAARATLEILIPDFVKQTSEEKPRDSEELEYFNHISIEDSRVYELTSKAGLLSPYQILHECLKRNHGMGDTSIKFEVVPGKNQKSEYVMACGKHTVRGWCKNKRVGKQLASQKILQLLHPHVKNWGSLLRMYGRESSKMVKQETSDKSVIELQQFARKNKPNLHILSKLQEEMRRLAEEREETRKKPKMSIVASAQPGGEPLCTVDV.

Residues 1-71 (METCGSPSPL…PAEDPLNFYG (71 aa)) form a disordered region. A necessary for nuclear localization and retention region spans residues 1 to 275 (METCGSPSPL…KYGGDSDHPS (275 aa)). The tract at residues 1-342 (METCGSPSPL…YFLGTGSIRK (342 aa)) is necessary for interaction with NCL. Residues serine 35, serine 92, serine 95, serine 271, and serine 275 each carry the phosphoserine modification. Over residues 263–276 (MEEKYGGDSDHPSD) the composition is skewed to basic and acidic residues. A disordered region spans residues 263–284 (MEEKYGGDSDHPSDGETSVQPM). Residues 276-738 (DGETSVQPMM…LAEEREETRK (463 aa)) are necessary for heme-binding and pri-miRNA processing. Threonine 279 bears the Phosphothreonine mark. Residues 301–334 (EPLPDGWIMTFHNSGVPVYLHRESRVVTWSRPYF) form the WW domain. Cysteine 352 serves as a coordination point for heme. A disordered region spans residues 361-405 (SEERERAAGIAPPEPELPPDEPDPLGTDAGPPDEKDPLGAEAAPG). Residues lysine 411 and lysine 487 each participate in a glycyl lysine isopeptide (Lys-Gly) (interchain with G-Cter in SUMO2) cross-link. DRBM domains lie at 498–565 (SEVC…ILIP) and 606–673 (SPYQ…LLHP). Position 664 is a phosphoserine (serine 664). Residues 688–760 (ESSKMVKQET…GGEPLCTVDV (73 aa)) are interaction with DROSHA. Residue lysine 694 forms a Glycyl lysine isopeptide (Lys-Gly) (interchain with G-Cter in SUMO2) linkage. The tract at residues 731–760 (EEREETRKKPKMSIVASAQPGGEPLCTVDV) is disordered.

Monomer; in absence of heme. Homodimer; the association with heme promotes its dimerization. Component of the microprocessor complex, or pri-miRNA processing protein complex, which is composed of DROSHA and DGCR8. The microprocessor complex is a heterotrimer; each of the two DROSHA RNase III domains binds one DGCR8 (via C-terminal region). Interacts with ILF3, NCL and DROSHA. Interacts with CPSF3 and ISY1; this interaction is in an RNA dependent manner. Interacts with PUS10; interaction promotes pri-miRNAs processing. Heme serves as cofactor. Phosphorylated at Ser-664 by ATM upon radiation, which is crucial for its stability. Post-translationally, ubiquitinated, leading to degradation in a proteasome-dependent manner. Deubiquitinated by USP51, leading to stabilization.

Its subcellular location is the nucleus. It localises to the nucleolus. Component of the microprocessor complex that acts as a RNA- and heme-binding protein that is involved in the initial step of microRNA (miRNA) biogenesis. Component of the microprocessor complex that is required to process primary miRNA transcripts (pri-miRNAs) to release precursor miRNA (pre-miRNA) in the nucleus. Within the microprocessor complex, DGCR8 function as a molecular anchor necessary for the recognition of pri-miRNA at dsRNA-ssRNA junction and directs DROSHA to cleave 11 bp away form the junction to release hairpin-shaped pre-miRNAs that are subsequently cut by the cytoplasmic DICER to generate mature miRNAs. The heme-bound DGCR8 dimer binds pri-miRNAs as a cooperative trimer (of dimers) and is active in triggering pri-miRNA cleavage, whereas the heme-free DGCR8 monomer binds pri-miRNAs as a dimer and is much less active. Both double-stranded and single-stranded regions of a pri-miRNA are required for its binding. Specifically recognizes and binds N6-methyladenosine (m6A)-containing pri-miRNAs, a modification required for pri-miRNAs processing. Involved in the silencing of embryonic stem cell self-renewal. Plays also a role in DNA repair by promoting the recruitment of RNF168 to RNF8 and MDC1 at DNA double-strand breaks and subsequently the clearance of DNA breaks. The polypeptide is Microprocessor complex subunit DGCR8 (DGCR8) (Bos taurus (Bovine)).